Reading from the N-terminus, the 470-residue chain is Amino-acid permease RocC (470 aa).

Helical transmembrane passes span 18–38 (FMIA…GFTI), 44–64 (LGAI…MLCL), 90–110 (GFMI…LELT), 119–139 (WLPS…IFLI), 159–179 (VAAI…LIDF), 196–216 (GLFP…NFSF), 243–263 (VIWR…AILP), 281–301 (IGIP…ILSV), 338–358 (ALLI…MAAE), 360–380 (VYLW…MSIC), 409–429 (LVPI…IFIP), and 433–453 (IGLY…HLSI).

Belongs to the amino acid-polyamine-organocation (APC) superfamily.

The protein localises to the cell membrane. Functionally, putative transport protein involved in arginine degradative pathway. Probably transports arginine or ornithine. The chain is Amino-acid permease RocC (rocC) from Bacillus subtilis (strain 168).